Consider the following 615-residue polypeptide: Medium-chain acyl-CoA ligase ACSF2, mitochondrial (615 aa).

A mitochondrion-targeting transit peptide spans 1–41 (MAVYHGMLRFGRLCIASLGARGPRTLLSRPRPNSKLQSVRA). An N6-acetyllysine modification is found at Lys-179. Lys-182 is modified (N6-acetyllysine; alternate). Lys-182 carries the post-translational modification N6-succinyllysine; alternate. Position 199 is an N6-acetyllysine (Lys-199). 263 to 271 (TSGTTGNPK) provides a ligand contact to ATP. N6-acetyllysine occurs at positions 340 and 398. Lys-478 bears the N6-succinyllysine mark. 2 residues coordinate ATP: Asp-493 and Arg-508. The residue at position 510 (Lys-510) is an N6-acetyllysine. N6-acetyllysine; alternate is present on residues Lys-544 and Lys-570. N6-succinyllysine; alternate occurs at positions 544 and 570. Residue Lys-599 coordinates ATP. Residue Lys-599 is modified to N6-succinyllysine.

Belongs to the ATP-dependent AMP-binding enzyme family.

It is found in the mitochondrion. It carries out the reaction a medium-chain fatty acid + ATP + CoA = a medium-chain fatty acyl-CoA + AMP + diphosphate. The catalysed reaction is octanoate + ATP + CoA = octanoyl-CoA + AMP + diphosphate. Functionally, acyl-CoA synthases catalyze the initial reaction in fatty acid metabolism, by forming a thioester with CoA. Has some preference toward medium-chain substrates. Plays a role in adipocyte differentiation. The sequence is that of Medium-chain acyl-CoA ligase ACSF2, mitochondrial from Mus musculus (Mouse).